The sequence spans 228 residues: Biopolymer transport protein exbB1 (228 aa).

The next 3 membrane-spanning stretches (helical) occupy residues 11–31 (LGLMAWPLFICSALTVMLLAE), 116–136 (LTLIGVISPLLGLLGTVLGLI), and 158–178 (LGVAMYTTAAGLLIAVPAVAG).

Belongs to the ExbB/TolQ family. The accessory proteins ExbB and ExbD seem to form a complex with TonB.

The protein resides in the cell inner membrane. In terms of biological role, involved in the TonB-dependent energy-dependent transport of various receptor-bound substrates. Protects ExbD from proteolytic degradation and functionally stabilizes TonB. In Vibrio cholerae serotype O1 (strain ATCC 39315 / El Tor Inaba N16961), this protein is Biopolymer transport protein exbB1 (exbB1).